A 623-amino-acid chain; its full sequence is Procollagen galactosyltransferase 1 (623 aa).

A signal peptide spans 1–30 (MAAAPRACKGHGRPLPVLLLLLLLALPPLG). N-linked (GlcNAc...) asparagine glycosylation is found at N97, N185, and N382. The segment covering 589–607 (RAKSQKMREQQALSREAKN) has biased composition (basic and acidic residues). Positions 589–623 (RAKSQKMREQQALSREAKNSDVLQSPLDSAARDEL) are disordered. A Prevents secretion from ER motif is present at residues 620–623 (RDEL).

This sequence belongs to the glycosyltransferase 25 family. Post-translationally, N-glycosylated.

Its subcellular location is the endoplasmic reticulum lumen. It catalyses the reaction (5R)-5-hydroxy-L-lysyl-[collagen] + UDP-alpha-D-galactose = (5R)-5-O-(beta-D-galactosyl)-5-hydroxy-L-lysyl-[collagen] + UDP + H(+). In terms of biological role, beta-galactosyltransferase that transfers beta-galactose to hydroxylysine residues of type I collagen. By acting on collagen glycosylation, facilitates the formation of collagen triple helix. Also involved in the biosynthesis of collagen type IV. The protein is Procollagen galactosyltransferase 1 (COLGALT1) of Bos taurus (Bovine).